The primary structure comprises 152 residues: Ribosome maturation factor RimP (152 aa).

The protein belongs to the RimP family.

Its subcellular location is the cytoplasm. In terms of biological role, required for maturation of 30S ribosomal subunits. The chain is Ribosome maturation factor RimP from Serratia proteamaculans (strain 568).